The chain runs to 124 residues: Urease subunit beta (124 aa).

Belongs to the urease beta subunit family. Heterotrimer of UreA (gamma), UreB (beta) and UreC (alpha) subunits. Three heterotrimers associate to form the active enzyme.

Its subcellular location is the cytoplasm. It carries out the reaction urea + 2 H2O + H(+) = hydrogencarbonate + 2 NH4(+). The protein operates within nitrogen metabolism; urea degradation; CO(2) and NH(3) from urea (urease route): step 1/1. This chain is Urease subunit beta, found in Bacillus subtilis (strain 168).